The chain runs to 181 residues: Probable pyruvoyl-dependent arginine decarboxylase (181 aa).

S43 is modified (pyruvic acid (Ser)).

The protein belongs to the PdaD family. Pyruvate serves as cofactor.

It catalyses the reaction L-arginine + H(+) = agmatine + CO2. This is Probable pyruvoyl-dependent arginine decarboxylase from Prosthecochloris aestuarii (strain DSM 271 / SK 413).